The chain runs to 540 residues: MALQSTILHMARKNLLQESCRQLLIQTHGLHKSVASGSLEIAAHSQADLKEESAVSPAEEVQKAARVKSLKEMPGPSTVANLLEFFYRDGFSRIHEIQMEHAKKYGKIFKSRFGPQFVVSIADRDMVAQVLRSESATPQRGNMESWKEYRDLRGRSTGLISAEGDEWLKMRSVLRQLIMRPRDVAVFSSDVNDVVADLVKRVKTLRSQQDDSQTVLNINDLFFKYAMEGVATILYETRLGCLENEIPKMSQEYITALHLMFSSFKTTMYAGAIPKWLRPIIPKPWEEFCSSWDGLFKFSQIHVDKRLSEIKKQMEKSEEIKGGLLTHMLVTREMNLEEIYANMTEMLLAGVDTTSFTLSWSTYLLARHPTIQQQIFEEVDRVLGGRVPTGEDVPYLPLIRGLVKETLRLFPVLPGNGRVTHDDLIVGGYLIPKGTQLALCHYSTSMDEENFPRPEEFRPDRWIRKDASDRVDNFGSIPFGYGIRSCIGRRIAELEMHLALTQLLQNFHIEVSPQTTEVHAKTHGLLCPGASINLRFTDRK.

Position 486 (Cys-486) interacts with heme.

The protein belongs to the cytochrome P450 family. It depends on heme as a cofactor. In terms of tissue distribution, following L-thyroxine, expressed in the retinal pigment epithelium (at protein level).

It localises to the membrane. It carries out the reaction all-trans-retinol + 2 reduced [adrenodoxin] + O2 + 2 H(+) = all-trans-3,4-didehydroretinol + 2 oxidized [adrenodoxin] + 2 H2O. Functionally, efficiently catalyzes the conversion of all-trans retinol (also called vitamin A1, the precursor of 11-cis retinal) to 3,4-didehydroretinol (also called vitamin A2, the precursor of 11-cis 3,4-didehydroretinal). Also acts on all-trans retinal and all-trans retinoic acid. The replacement of 11-cis retinal chromophore in photopigments with 11-cis 3,4-didehydroretinal enhances sensitivity to long-wavelength light. This may improve vision in fresh water which is often turbid. The chain is Cytochrome P450 27C1 (cyp27c1) from Danio rerio (Zebrafish).